The chain runs to 830 residues: Periplasmic nitrate reductase (830 aa).

The tat-type signal signal peptide spans 1–30; it reads MTTRREFIKRSAAVTAACTAGISLSGEASN. Residues 40–96 enclose the 4Fe-4S Mo/W bis-MGD-type domain; the sequence is LKWSKAPCRFCGTGCSVNVAVKDNQVVATHGDIQSEVNRGLNCVKGYFLSKIMYGKD. [4Fe-4S] cluster-binding residues include Cys47, Cys50, Cys54, and Cys82. Mo-bis(molybdopterin guanine dinucleotide) contacts are provided by residues Lys84, Gln151, Asn176, Cys180, 213–220, 244–248, Met374, Gln378, Asn484, 510–511, Lys533, Asp560, and 720–729; these read WGSNMAEM, STFQH, SE, and TGRVLEHWHS. Trp796 contributes to the substrate binding site. Mo-bis(molybdopterin guanine dinucleotide)-binding residues include Asn804 and Lys821.

This sequence belongs to the prokaryotic molybdopterin-containing oxidoreductase family. NasA/NapA/NarB subfamily. As to quaternary structure, component of the periplasmic nitrate reductase NapAB complex composed of NapA and NapB. [4Fe-4S] cluster serves as cofactor. Requires Mo-bis(molybdopterin guanine dinucleotide) as cofactor. Post-translationally, predicted to be exported by the Tat system. The position of the signal peptide cleavage has not been experimentally proven.

It is found in the periplasm. The catalysed reaction is 2 Fe(II)-[cytochrome] + nitrate + 2 H(+) = 2 Fe(III)-[cytochrome] + nitrite + H2O. Catalytic subunit of the periplasmic nitrate reductase complex NapAB. Receives electrons from NapB and catalyzes the reduction of nitrate to nitrite. The polypeptide is Periplasmic nitrate reductase (Hahella chejuensis (strain KCTC 2396)).